The chain runs to 503 residues: Cytochrome P450 3A13 (503 aa).

Heme is bound at residue Cys-442.

It belongs to the cytochrome P450 family. Heme serves as cofactor.

It localises to the endoplasmic reticulum membrane. The protein resides in the microsome membrane. The enzyme catalyses an organic molecule + reduced [NADPH--hemoprotein reductase] + O2 = an alcohol + oxidized [NADPH--hemoprotein reductase] + H2O + H(+). Can activate aflatoxin B1 to a genotoxic product. In Mus musculus (Mouse), this protein is Cytochrome P450 3A13 (Cyp3a13).